We begin with the raw amino-acid sequence, 1235 residues long: UPF0507 protein DEHA2G04334g (1235 aa).

A VPS9 domain is found at 323-487; that stretch reads QNDDSDAIKI…LSSSMNDEPQ (165 aa). Positions 1097 to 1124 are disordered; the sequence is STTEADTTDTTDATDATHASPNLANSTN. Residues 1100–1115 show a composition bias toward low complexity; that stretch reads EADTTDTTDATDATHA.

The protein belongs to the UPF0507 family.

The protein is UPF0507 protein DEHA2G04334g of Debaryomyces hansenii (strain ATCC 36239 / CBS 767 / BCRC 21394 / JCM 1990 / NBRC 0083 / IGC 2968) (Yeast).